The primary structure comprises 314 residues: tRNA dimethylallyltransferase (314 aa).

Residue 9–16 (GPTAVGKT) participates in ATP binding. Residue 11-16 (TAVGKT) coordinates substrate. The segment at 34–37 (DSMQ) is interaction with substrate tRNA.

Belongs to the IPP transferase family. As to quaternary structure, monomer. It depends on Mg(2+) as a cofactor.

The enzyme catalyses adenosine(37) in tRNA + dimethylallyl diphosphate = N(6)-dimethylallyladenosine(37) in tRNA + diphosphate. Its function is as follows. Catalyzes the transfer of a dimethylallyl group onto the adenine at position 37 in tRNAs that read codons beginning with uridine, leading to the formation of N6-(dimethylallyl)adenosine (i(6)A). The chain is tRNA dimethylallyltransferase from Clostridium tetani (strain Massachusetts / E88).